Here is a 614-residue protein sequence, read N- to C-terminus: Glutamine--fructose-6-phosphate aminotransferase [isomerizing] (614 aa).

Catalysis depends on cysteine 2, which acts as the Nucleophile; for GATase activity. The Glutamine amidotransferase type-2 domain maps to 2–221 (CGIVGYIGKR…DGEIAVINRG (220 aa)). 2 SIS domains span residues 291-430 (YKEK…EKGT) and 463-604 (LSKT…VDQP). Lysine 609 serves as the catalytic For Fru-6P isomerization activity.

In terms of assembly, homodimer.

The protein resides in the cytoplasm. It catalyses the reaction D-fructose 6-phosphate + L-glutamine = D-glucosamine 6-phosphate + L-glutamate. Functionally, catalyzes the first step in hexosamine metabolism, converting fructose-6P into glucosamine-6P using glutamine as a nitrogen source. In Bacteroides thetaiotaomicron (strain ATCC 29148 / DSM 2079 / JCM 5827 / CCUG 10774 / NCTC 10582 / VPI-5482 / E50), this protein is Glutamine--fructose-6-phosphate aminotransferase [isomerizing].